The chain runs to 161 residues: Allophycocyanin alpha chain (161 aa).

Asparagine 71 bears the N4-methylasparagine mark. Cysteine 81 is a binding site for (2R,3E)-phycocyanobilin.

This sequence belongs to the phycobiliprotein family. Heterodimer of an alpha and a beta chain. In terms of processing, contains one covalently linked phycocyanobilin chromophore.

It localises to the plastid. It is found in the cyanelle thylakoid membrane. In terms of biological role, light-harvesting photosynthetic bile pigment-protein from the phycobiliprotein complex. Allophycocyanin has a maximum absorption at approximately 650 nanometers. In Cyanophora paradoxa, this protein is Allophycocyanin alpha chain (apcA).